The chain runs to 835 residues: Transcription intermediary factor 1-beta (835 aa).

The segment covering 14-24 has biased composition (low complexity); the sequence is AATAASAASGS. A disordered region spans residues 14–57; the sequence is AATAASAASGSPGSGEGSAGGEKRPAASSAAAASASASSPAGGG. Phosphoserine occurs at positions 24, 27, and 31. Lys-36 participates in a covalent cross-link: Glycyl lysine isopeptide (Lys-Gly) (interchain with G-Cter in SUMO2). Low complexity predominate over residues 39 to 53; it reads AASSAAAASASASSP. A Phosphoserine modification is found at Ser-52. The RING-type zinc finger occupies 67-123; it reads CGVCRERLRPERDPRLLPCLHSACSACLGPATPAAANNSGDGGSAGDGAMVDCPVCK. A Glycyl lysine isopeptide (Lys-Gly) (interchain with G-Cter in SUMO2) cross-link involves residue Lys-129. Ser-140 is modified (phosphoserine). The B box-type 1; atypical zinc finger occupies 150 to 197; that stretch reads DANQCCTSCEDNAPATSYCVECSEPLCETCVEAHQRVKYTKDHTVRST. Zn(2+) is bound by residues Cys-155, Cys-158, Cys-179, and His-183. A Glycyl lysine isopeptide (Lys-Gly) (interchain with G-Cter in SUMO2) cross-link involves residue Lys-201. The B box-type 2 zinc-finger motif lies at 206–247; it reads ERTVYCNVHKHEPLVLFCESCDTLTCRDCQLNAHKDHQYQFL. 4 residues coordinate Zn(2+): Cys-211, His-214, Cys-234, and His-239. Positions 248 to 378 are leucine zipper alpha helical coiled-coil region; that stretch reads EDAVRNQRKL…LIYFQLHRAL (131 aa). An interaction with MAGEC2 region spans residues 249–378; it reads DAVRNQRKLL…LIYFQLHRAL (130 aa). Residues Lys-256 and Lys-263 each participate in a glycyl lysine isopeptide (Lys-Gly) (interchain with G-Cter in SUMO2) cross-link. Lys-268 carries the N6-acetyllysine modification. Lys-274 participates in a covalent cross-link: Glycyl lysine isopeptide (Lys-Gly) (interchain with G-Cter in SUMO2). N6-acetyllysine; alternate is present on Lys-306. A Glycyl lysine isopeptide (Lys-Gly) (interchain with G-Cter in SUMO2); alternate cross-link involves residue Lys-306. Lys-321 participates in a covalent cross-link: Glycyl lysine isopeptide (Lys-Gly) (interchain with G-Cter in SUMO2). Lys-342 carries the post-translational modification N6-acetyllysine. Residue Lys-368 forms a Glycyl lysine isopeptide (Lys-Gly) (interchain with G-Cter in SUMO2) linkage. Residues 368 to 372 are involved in binding PPP1CA; sequence KLIYF. Lys-379 carries the post-translational modification N6-acetyllysine; alternate. Residue Lys-379 forms a Glycyl lysine isopeptide (Lys-Gly) (interchain with G-Cter in SUMO2); alternate linkage. Lys-379 participates in a covalent cross-link: Glycyl lysine isopeptide (Lys-Gly) (interchain with G-Cter in SUMO1); alternate. Lys-409 participates in a covalent cross-link: Glycyl lysine isopeptide (Lys-Gly) (interchain with G-Cter in SUMO2). The tract at residues 413 to 481 is disordered; sequence ERPGTNSTGP…SRSGEGEVSG (69 aa). A Phosphoserine modification is found at Ser-419. Lys-436 participates in a covalent cross-link: Glycyl lysine isopeptide (Lys-Gly) (interchain with G-Cter in SUMO2). Over residues 436 to 445 the composition is skewed to polar residues; the sequence is KQGSGSSQPM. Residues Ser-439 and Ser-441 each carry the phosphoserine modification. Lys-470 participates in a covalent cross-link: Glycyl lysine isopeptide (Lys-Gly) (interchain with G-Cter in SUMO2); alternate. Lys-470 participates in a covalent cross-link: Glycyl lysine isopeptide (Lys-Gly) (interchain with G-Cter in SUMO1); alternate. Position 471 is a citrulline (Arg-471). Residue Ser-472 is modified to Phosphoserine. At Arg-473 the chain carries Citrulline. Ser-474, Ser-480, and Ser-490 each carry phosphoserine. Positions 477–514 are HP1 box; it reads GEVSGLMRKVPRVSLERLDLDLTSDSQPPVFKVFPGST. Residues 482–495 carry the PxVxL motif motif; it reads LMRKVPRVSLERLD. A Phosphothreonine modification is found at Thr-499. Ser-502 carries the phosphoserine modification. A Glycyl lysine isopeptide (Lys-Gly) (interchain with G-Cter in SUMO2) cross-link involves residue Lys-508. Lys-555 participates in a covalent cross-link: Glycyl lysine isopeptide (Lys-Gly) (interchain with G-Cter in SUMO2); alternate. A Glycyl lysine isopeptide (Lys-Gly) (interchain with G-Cter in SUMO); alternate cross-link involves residue Lys-555. Lys-576 participates in a covalent cross-link: Glycyl lysine isopeptide (Lys-Gly) (interchain with G-Cter in SUMO2). Phosphoserine is present on Ser-595. Residues 626-673 form a PHD-type zinc finger; it reads ATICRVCQKPGDLVMCNQCEFCFHLDCHLPSLQDVPGEEWSCSLCHVL. A Glycyl lysine isopeptide (Lys-Gly) (interchain with G-Cter in SUMO) cross-link involves residue Lys-677. Ser-684, Ser-690, and Ser-698 each carry phosphoserine. A Bromo domain is found at 696–800; it reads KLSPANQRKC…RFFETRMNDA (105 aa). Residue Lys-751 forms a Glycyl lysine isopeptide (Lys-Gly) (interchain with G-Cter in SUMO2); alternate linkage. Lys-751 participates in a covalent cross-link: Glycyl lysine isopeptide (Lys-Gly) (interchain with G-Cter in SUMO1); alternate. A Glycyl lysine isopeptide (Lys-Gly) (interchain with G-Cter in SUMO); alternate cross-link involves residue Lys-751. Ser-753 carries the post-translational modification Phosphoserine. Tyr-756 is modified (phosphotyrosine). A Phosphoserine modification is found at Ser-758. An N6-acetyllysine; alternate mark is found at Lys-771, Lys-775, and Lys-780. Glycyl lysine isopeptide (Lys-Gly) (interchain with G-Cter in SUMO2); alternate cross-links involve residues Lys-771, Lys-775, and Lys-780. Residue Lys-780 forms a Glycyl lysine isopeptide (Lys-Gly) (interchain with G-Cter in SUMO1); alternate linkage. Residue Ser-785 is modified to Phosphoserine. Residue Lys-805 forms a Glycyl lysine isopeptide (Lys-Gly) (interchain with G-Cter in SUMO2) linkage. Ser-825 is subject to Phosphoserine; by ATM and ATR and dsDNA kinase.

It belongs to the TRIM/RBCC family. In terms of assembly, interacts with ZNF382. Interacts with SETX. Oligomer; the RBCC domain homotrimerizes and interacts with one molecule of KRAB to form the KRAB-KAP1 corepressor complex. Binding to a KRAB domain is an absolute requirement for silencing gene expression. Interacts with CEBPB and NR3C1. Interacts with a number of KRAB-ZFP proteins including ZNF10, ZFP53, ZFP68 and ZNF256. Interacts with NCOR1, NR3C1 and CHD3. Interacts with CEBPB (via the RING-type and PHD-type zinc fingers). Component of a ternary complex that includes TRIM28, a HP1 protein (CBX1, CBX3 OR CBX5), a KRAB domain-containing protein, and DNA. Interacts with CBX5 (via the PxVxL motif); the interaction occurs in interphase nuclei and competes for binding POGZ. Interacts with POGZ; the interaction competes for interaction with CBX5. Interacts with SETDB1; the interaction is enhanced by KAP1 sumoylation, stimulates SETDB1 histone methyltransferase activity and gene silencing. Interacts (via the PHD-type zinc finger) with UBE2I; the interaction is required for sumoylation and repressor activity. Component of the TRIM28/KAP1-ERBB4-MDM2 complex involved in connecting growth factor and DNA damage responses. Interacts directly with ERBB4; the interaction represses ERBB4-mediated transcription activity. Interacts with MDM2; the interaction contributes to p53/TP53 inactivation. Component of the TRIM28/KAP1-MDM2-p53/TP53; involved in regulating p53/TP53 stabilization and activity. Interacts (via the leucine zipper alpha helical coiled-coil) with E2F1 (central region); the interaction inhibits E2F1 acetylation and transcriptional activity. Interacts with PPP1CA; the interaction dephosphorylates TRIM28 at Ser-824 and forms a complex at the p21 promoter site. Interacts with PPP1CB; the interaction is weak but is increased on dephosphorylation at Ser-824. Interacts with SMARCAD1. Interacts with, and sumoylates IRF7. Interacts with MAGEC2. Part of a complex composed of TRIM28, HDAC1, HDAC2 and EHMT2. Interacts with AICDA. The large PER complex involved in the histone methylation is composed of at least PER2, CBX3, TRIM28, SUV39H1 and/or SUV39H2; CBX3 mediates the formation of the complex. Interacts with NR4A3; the interactions potentiates NR4A3 activity on NurRE promoter. Interacts (unphosphorylated or phosphorylated form) with ZBTB1 (via BTB domain). Probably part of a corepressor complex containing ZNF304, TRIM28, SETDB1 and DNMT1. Interacts with ATRX. Forms a complex with ATRX, SETDB1 and ZNF274. Interacts with ZFP568; the interaction mediates ZFP568 transcriptional repression activity. Interacts with RRP1B. Interacts with CRY1. Interacts with ZNF263; recruited to the SIX3 promoter along with other proteins involved in chromatin modification and transcriptional corepression where it contributes to transcriptional repression. Interacts with CYREN (via XLF motif). Interacts with TRIM17; this interaction prevents TRIM28 activity. Interacts with ZNF746. Interacts with PHF13. Interacts with ZNF354C. Interacts with ZNF432; the interaction is independent of PARP1. In terms of processing, ATM-induced phosphorylation on Ser-825 represses sumoylation leading to the de-repression of expression of a subset of genes involved in cell cycle control and apoptosis in response to genotoxic stress. Dephosphorylation by the phosphatases, PPP1CA and PP1CB forms, allows sumoylation and expression of TRIM28 target genes. Sumoylation/desumoylation events regulate TRIM28-mediated transcriptional repression. Sumoylation is required for interaction with CHD3 and SETDB1 and the corepressor activity. Represses and is repressed by Ser-824 phosphorylation. Enhances the TRIM28 corepressor activity, inhibiting transcriptional activity of a number of genes including GADD45A and CDKN1A/p21. Lys-555, Lys-780 and Lys-805 are the major sites of sumoylation. In response to Dox-induced DNA damage, enhanced phosphorylation on Ser-825 prevents sumoylation and allows de-repression of CDKN1A/p21. Post-translationally, auto-ubiquitinated; enhanced by MAGEA2 and MAGEC2. In terms of processing, citrullinated by PADI4. ADP-ribosylated by SIRT6, promoting TRIM28/KAP1 interaction with CBX5, thereby contributing to the packaging of LINE-1 retrotransposon elements into transcriptionally repressive heterochromatin.

The protein localises to the nucleus. It carries out the reaction S-ubiquitinyl-[E2 ubiquitin-conjugating enzyme]-L-cysteine + [acceptor protein]-L-lysine = [E2 ubiquitin-conjugating enzyme]-L-cysteine + N(6)-ubiquitinyl-[acceptor protein]-L-lysine.. The protein operates within protein modification; protein sumoylation. Functionally, nuclear corepressor for KRAB domain-containing zinc finger proteins (KRAB-ZFPs). Mediates gene silencing by recruiting CHD3, a subunit of the nucleosome remodeling and deacetylation (NuRD) complex, and SETDB1 (which specifically methylates histone H3 at 'Lys-9' (H3K9me)) to the promoter regions of KRAB target genes. Enhances transcriptional repression by coordinating the increase in H3K9me, the decrease in histone H3 'Lys-9 and 'Lys-14' acetylation (H3K9ac and H3K14ac, respectively) and the disposition of HP1 proteins to silence gene expression. Recruitment of SETDB1 induces heterochromatinization. May play a role as a coactivator for CEBPB and NR3C1 in the transcriptional activation of ORM1. Also a corepressor for ERBB4. Inhibits E2F1 activity by stimulating E2F1-HDAC1 complex formation and inhibiting E2F1 acetylation. May serve as a partial backup to prevent E2F1-mediated apoptosis in the absence of RB1. Important regulator of CDKN1A/p21(CIP1). Has E3 SUMO-protein ligase activity toward itself via its PHD-type zinc finger. Also specifically sumoylates IRF7, thereby inhibiting its transactivation activity. Ubiquitinates p53/TP53 leading to its proteasomal degradation; the function is enhanced by MAGEC2 and MAGEA2, and possibly MAGEA3 and MAGEA6. Mediates the nuclear localization of KOX1, ZNF268 and ZNF300 transcription factors. In association with isoform 2 of ZFP90, is required for the transcriptional repressor activity of FOXP3 and the suppressive function of regulatory T-cells (Treg). Probably forms a corepressor complex required for activated KRAS-mediated promoter hypermethylation and transcriptional silencing of tumor suppressor genes (TSGs) or other tumor-related genes in colorectal cancer (CRC) cells. Required to maintain a transcriptionally repressive state of genes in undifferentiated embryonic stem cells (ESCs). In ESCs, in collaboration with SETDB1, is also required for H3K9me3 and silencing of endogenous and introduced retroviruses in a DNA-methylation independent-pathway. Associates at promoter regions of tumor suppressor genes (TSGs) leading to their gene silencing. The SETDB1-TRIM28-ZNF274 complex may play a role in recruiting ATRX to the 3'-exons of zinc finger genes with atypical chromatin signatures to establish or maintain/protect H3K9me3 at these transcriptionally active regions. This Rattus norvegicus (Rat) protein is Transcription intermediary factor 1-beta.